We begin with the raw amino-acid sequence, 148 residues long: Large ribosomal subunit protein bL9 (148 aa).

Belongs to the bacterial ribosomal protein bL9 family.

Its function is as follows. Binds to the 23S rRNA. The chain is Large ribosomal subunit protein bL9 from Salinispora arenicola (strain CNS-205).